The primary structure comprises 99 residues: Prostate and testis expressed protein 14 (99 aa).

The N-terminal stretch at 1 to 21 (MEKYLLLLLLGIFLRVGFLQA) is a signal peptide. The UPAR/Ly6 domain occupies 22–99 (LTCVSCGRLN…CDHQNLCNKP (78 aa)). Cystine bridges form between Cys-24/Cys-51, Cys-27/Cys-36, Cys-43/Cys-69, Cys-73/Cys-89, and Cys-90/Cys-96. N-linked (GlcNAc...) asparagine glycosylation is present at Asn-31. Asn-75 carries an N-linked (GlcNAc...) asparagine glycan.

Belongs to the PATE family. In terms of assembly, monomer. Glycosylated. In terms of tissue distribution, predominantly expressed in the seminal vesicles. Expressed in prostate, and to a lesser extent in the cauda epididymis.

Its subcellular location is the secreted. This is Prostate and testis expressed protein 14 from Mus musculus (Mouse).